Consider the following 80-residue polypeptide: uncharacterized protein (80 aa).

This is an uncharacterized protein from Acidianus sp. F28 (AFV-2).